A 433-amino-acid polypeptide reads, in one-letter code: Probable D-serine dehydratase (433 aa).

Lys-110 carries the post-translational modification N6-(pyridoxal phosphate)lysine.

Belongs to the serine/threonine dehydratase family. DsdA subfamily. The cofactor is pyridoxal 5'-phosphate.

It catalyses the reaction D-serine = pyruvate + NH4(+). The sequence is that of Probable D-serine dehydratase from Oenococcus oeni (strain ATCC BAA-331 / PSU-1).